A 208-amino-acid chain; its full sequence is Inner membrane-spanning protein YciB (208 aa).

Transmembrane regions (helical) follow at residues 49–69 (APVLLATVVVIVATLAQILWL), 78–98 (TMLWVSLALVTALGSATIYFH), 105–125 (WKPTVLYWVMGASLLVGELVF), 150–170 (FSWVAFFAAMGCLNLWVAFNF), and 178–198 (FKLFGGMGLMLVFVLAQAFFL).

The protein belongs to the YciB family.

The protein localises to the cell inner membrane. Functionally, plays a role in cell envelope biogenesis, maintenance of cell envelope integrity and membrane homeostasis. This chain is Inner membrane-spanning protein YciB, found in Polaromonas naphthalenivorans (strain CJ2).